The primary structure comprises 333 residues: DNA-directed RNA polymerase subunit alpha (333 aa).

An alpha N-terminal domain (alpha-NTD) region spans residues 1-246; the sequence is MKKMVQIKYK…AHLQVIGDVK (246 aa). The interval 262–333 is alpha C-terminal domain (alpha-CTD); it reads VEPSIHSVDI…YNVTLNRGEK (72 aa).

Belongs to the RNA polymerase alpha chain family. In terms of assembly, homodimer. The RNAP catalytic core consists of 2 alpha, 1 beta, 1 beta' and 1 omega subunit. When a sigma factor is associated with the core the holoenzyme is formed, which can initiate transcription.

It catalyses the reaction RNA(n) + a ribonucleoside 5'-triphosphate = RNA(n+1) + diphosphate. In terms of biological role, DNA-dependent RNA polymerase catalyzes the transcription of DNA into RNA using the four ribonucleoside triphosphates as substrates. This Mycoplasmopsis pulmonis (strain UAB CTIP) (Mycoplasma pulmonis) protein is DNA-directed RNA polymerase subunit alpha.